The primary structure comprises 1221 residues: MASRTKTGLMETPRSKPSPPTPRVSKPTVTKSDGNSPSPVQSTRLSIDRSPQTVNSKPVSDRRTARVPTPPEANYFLIIICMAFQKSQSRLGKGTGLLVQQTQEDLRKANEQIERLKKDKAKALDDLKESEKLTKEANEKLREALAAQHHAEKSSEIEKFRAVELEQAGIEAVHKKEVSWKKEVESIRSQHALDISALLSTTEELHRIKQELAMTADAKNKALSHAEEATKIAENQAEKAEILSSELSRLKALVGSDEQKKSNEDDEVVSKLKSEIEMLRGKLEKVSILENTLKDQEESIELLHVDLQAAKMVESYANNLAAEWKNEVDKQVEESKELKTSASESLDLAMKQLEENNHALHEAELGNATLKEKVESLVTTIGRQENDLEESQHQVCISKEETSKLEKLVESIKSDLETTQGEKVRALLNEKTATSQIQNLLSEKTELATELENCKKEEEKIKKAMESLTLDLQEVSVEAKEAKEKLLTCQAELELCGVQIESLKLAEKDTNEKHGKMLEDARNEIDGLKSSLENTENEFFNSKTEWEQRELHLMLCVKKLEDGNFSVQEELSKVKNLLHLKEVEACAAKEEDAKMQTNRKELEEEIKDLQEIVEVAKADSMKLKESLVEKEDELKNTAAENRKLREMEVSSIDKIDQLSKVKESLVDKETKLQNIIQEAEELRVKEIDYLKKIEELSAAKESLVEKETKLLSTVQEAEELRRRELACLKKIEELSAVNERLVDKETKLQSSIQEVEVLKEREAENIKQIEELSLSNERLVEKEAKLQTVVQENEELREKESAYQKKIEELSKVDEIFADREAKLQSSTQENEELREREVAYLKKIEELAKLQENLLDKENELHDMVLEIEDLKAKDSLAEKKIEELSNLNKSLLVKESELQDVVFENEKLKSKEALSLKTTEELSDVKQTLADKEKELKTAVVENEKLKAQAASSFQKIEELKNLKQSLLDKENELEGVFQANEELKAKEASSLKKIDELLHLEQSWIDKGNENQELKVREASAAKRIEELSKMKESLLDKELQTVIHDNYELKAREASALKKIEELSKLLEEASSTHEKGEEITNTNPFDNSTGEQKVQESPLEAIDRHLKDDTTIHWSAHNVQVIGKGEKGKDKDTVESEVYHLEKREASSERDTEHDFAEEEVDSKAEGSENFDQLSNGLSLAEQTEDVVSKDQQQKKKKPLLRKFGNLLKKKSSSQK.

The segment at 1 to 68 (MASRTKTGLM…VSDRRTARVP (68 aa)) is disordered. Residues 1 to 82 (MASRTKTGLM…ANYFLIIICM (82 aa)) constitute a chloroplast transit peptide. Residues 32 to 58 (SDGNSPSPVQSTRLSIDRSPQTVNSKP) are compositionally biased toward polar residues. Coiled-coil stretches lie at residues 95–149 (TGLL…AAQH), 202–543 (TEEL…FNSK), and 587–1084 (AAKE…GEEI). Residues 1073–1083 (EASSTHEKGEE) show a composition bias toward basic and acidic residues. Residues 1073–1221 (EASSTHEKGE…LLKKKSSSQK (149 aa)) are disordered. Residues 1084-1097 (ITNTNPFDNSTGEQ) are compositionally biased toward polar residues. Composition is skewed to basic and acidic residues over residues 1106–1116 (AIDRHLKDDTT) and 1129–1160 (KGEK…TEHD). A compositionally biased stretch (polar residues) spans 1175-1187 (NFDQLSNGLSLAE).

It belongs to the WEB family.

The protein resides in the plastid. Its subcellular location is the chloroplast. In Arabidopsis thaliana (Mouse-ear cress), this protein is WEB family protein At4g27595, chloroplastic.